Reading from the N-terminus, the 436-residue chain is Glutamyl-tRNA reductase (436 aa).

Substrate-binding positions include 56–59, Ser114, 119–121, and Gln125; these read TCNR and EAQ. The active-site Nucleophile is Cys57. 194 to 199 contributes to the NADP(+) binding site; that stretch reads GAGEMI.

It belongs to the glutamyl-tRNA reductase family. As to quaternary structure, homodimer.

It catalyses the reaction (S)-4-amino-5-oxopentanoate + tRNA(Glu) + NADP(+) = L-glutamyl-tRNA(Glu) + NADPH + H(+). Its pathway is porphyrin-containing compound metabolism; protoporphyrin-IX biosynthesis; 5-aminolevulinate from L-glutamyl-tRNA(Glu): step 1/2. Catalyzes the NADPH-dependent reduction of glutamyl-tRNA(Glu) to glutamate 1-semialdehyde (GSA). The chain is Glutamyl-tRNA reductase from Acidovorax sp. (strain JS42).